A 292-amino-acid chain; its full sequence is UPF0696 protein C11orf68 homolog (292 aa).

Positions M1–G10 are enriched in low complexity. Positions M1–G60 are disordered. Over residues E35–P44 the composition is skewed to basic and acidic residues.

It belongs to the UPF0696 family.

The sequence is that of UPF0696 protein C11orf68 homolog from Bos taurus (Bovine).